The following is a 264-amino-acid chain: MTSVSERFRSLKQAGQCALIPFITAGDPDLETTEQALKILDAAGADFIELGVPYSDPLADGPTIQAAATRALSRGVTLEQVLAIVQRVHGQLTAPIILFTYYNPIFYRGIDAFMAQVAAAGVKGLVIPDLPLEESQMVLDAATSHGLDLILLVAPTSPTERIEAIAKASQGFIYLVSVTGVTGARTSVASRVGELLPKLRQVTDKPIGVGFGVSDPAQARQLKEWGADGVIVGSAVVKRLATGTPAEGLAAVKEFCESLKEAIA.

Residues E49 and D60 each act as proton acceptor in the active site.

The protein belongs to the TrpA family. As to quaternary structure, tetramer of two alpha and two beta chains.

The catalysed reaction is (1S,2R)-1-C-(indol-3-yl)glycerol 3-phosphate + L-serine = D-glyceraldehyde 3-phosphate + L-tryptophan + H2O. The protein operates within amino-acid biosynthesis; L-tryptophan biosynthesis; L-tryptophan from chorismate: step 5/5. Its function is as follows. The alpha subunit is responsible for the aldol cleavage of indoleglycerol phosphate to indole and glyceraldehyde 3-phosphate. This Picosynechococcus sp. (strain ATCC 27264 / PCC 7002 / PR-6) (Agmenellum quadruplicatum) protein is Tryptophan synthase alpha chain.